The sequence spans 469 residues: UDP-N-acetylmuramate--L-alanine ligase (469 aa).

119–125 (GTHGKTT) lines the ATP pocket.

It belongs to the MurCDEF family.

It localises to the cytoplasm. It carries out the reaction UDP-N-acetyl-alpha-D-muramate + L-alanine + ATP = UDP-N-acetyl-alpha-D-muramoyl-L-alanine + ADP + phosphate + H(+). It functions in the pathway cell wall biogenesis; peptidoglycan biosynthesis. Its function is as follows. Cell wall formation. The polypeptide is UDP-N-acetylmuramate--L-alanine ligase (Ruthia magnifica subsp. Calyptogena magnifica).